The sequence spans 43 residues: Neurotrophic factor BDNF (43 aa).

It belongs to the NGF-beta family.

It is found in the secreted. In terms of biological role, promotes the survival of neuronal populations that are all located either in the central nervous system or directly connected to it. In Macrovipera lebetinus (Levantine viper), this protein is Neurotrophic factor BDNF (BDNF).